Consider the following 244-residue polypeptide: 14-3-3 protein beta/alpha-1 (244 aa).

Met1 bears the N-acetylmethionine mark.

It belongs to the 14-3-3 family. In terms of assembly, homodimer, and heterodimer with other family members. In terms of tissue distribution, expressed in brain, gill, heart, intestine, kidney, liver, ovary, skin, spleen and testis.

The protein localises to the cytoplasm. Adapter protein implicated in the regulation of a large spectrum of both general and specialized signaling pathways. Binds to a large number of partners, usually by recognition of a phosphoserine or phosphothreonine motif. Binding generally results in the modulation of the activity of the binding partner. This chain is 14-3-3 protein beta/alpha-1, found in Oncorhynchus mykiss (Rainbow trout).